A 118-amino-acid chain; its full sequence is Large ribosomal subunit protein bL19 (118 aa).

Belongs to the bacterial ribosomal protein bL19 family.

Functionally, this protein is located at the 30S-50S ribosomal subunit interface and may play a role in the structure and function of the aminoacyl-tRNA binding site. In Dictyoglomus turgidum (strain DSM 6724 / Z-1310), this protein is Large ribosomal subunit protein bL19.